The following is a 339-amino-acid chain: Large ribosomal subunit protein uL10 (339 aa).

The disordered stretch occupies residues 300–339; that stretch reads AAAQATPSVEEREEEEKPEEEEEEEEKEEEAIEGLGALFG. The segment covering 310 to 331 has biased composition (acidic residues); the sequence is EREEEEKPEEEEEEEEKEEEAI.

This sequence belongs to the universal ribosomal protein uL10 family. Part of the 50S ribosomal subunit. Forms part of the ribosomal stalk which helps the ribosome interact with GTP-bound translation factors. Forms a heptameric L10(L12)2(L12)2(L12)2 complex, where L10 forms an elongated spine to which the L12 dimers bind in a sequential fashion.

Its function is as follows. Forms part of the ribosomal stalk, playing a central role in the interaction of the ribosome with GTP-bound translation factors. This chain is Large ribosomal subunit protein uL10, found in Archaeoglobus fulgidus (strain ATCC 49558 / DSM 4304 / JCM 9628 / NBRC 100126 / VC-16).